A 141-amino-acid chain; its full sequence is VLSPADKTNVKASWEKLGGHGAAYGAEALERMFLSFPTTKTYFPHFDLSHGSAQLQGHGKKVADALANAAAHVDDLPGALSALSDLHAHKLRVDPVNFKLLSHCLLVTLAAHLPADFTPAVHASLDKFLASVSTVLTSKYR.

The Globin domain occupies 1-141 (VLSPADKTNV…VSTVLTSKYR (141 aa)). Position 3 is a phosphoserine (Ser-3). Residue Lys-7 is modified to N6-succinyllysine. Position 8 is a phosphothreonine (Thr-8). N6-succinyllysine is present on Lys-11. Position 16 is an N6-acetyllysine; alternate (Lys-16). An N6-succinyllysine; alternate modification is found at Lys-16. The residue at position 24 (Tyr-24) is a Phosphotyrosine. Ser-35 is subject to Phosphoserine. Lys-40 is modified (N6-succinyllysine). At Ser-49 the chain carries Phosphoserine. His-58 is an O2 binding site. His-87 serves as a coordination point for heme b. Residue Ser-102 is modified to Phosphoserine. Thr-108 is subject to Phosphothreonine. A phosphoserine mark is found at Ser-124 and Ser-131. Residues Thr-134 and Thr-137 each carry the phosphothreonine modification. The residue at position 138 (Ser-138) is a Phosphoserine.

The protein belongs to the globin family. In terms of assembly, heterotetramer of two alpha chains and two beta chains. In terms of tissue distribution, red blood cells.

Its function is as follows. Involved in oxygen transport from the lung to the various peripheral tissues. In Otospermophilus beecheyi (California ground squirrel), this protein is Hemoglobin subunit alpha.